The chain runs to 212 residues: Uracil phosphoribosyltransferase (212 aa).

5-phospho-alpha-D-ribose 1-diphosphate-binding positions include Arg78, Arg103, and 130–138; that span reads DPMLATGGS. Uracil contacts are provided by residues Ile193 and 198–200; that span reads GDA. Asp199 serves as a coordination point for 5-phospho-alpha-D-ribose 1-diphosphate.

Belongs to the UPRTase family. It depends on Mg(2+) as a cofactor.

The catalysed reaction is UMP + diphosphate = 5-phospho-alpha-D-ribose 1-diphosphate + uracil. The protein operates within pyrimidine metabolism; UMP biosynthesis via salvage pathway; UMP from uracil: step 1/1. Its activity is regulated as follows. Allosterically activated by GTP. In terms of biological role, catalyzes the conversion of uracil and 5-phospho-alpha-D-ribose 1-diphosphate (PRPP) to UMP and diphosphate. The sequence is that of Uracil phosphoribosyltransferase from Bordetella petrii (strain ATCC BAA-461 / DSM 12804 / CCUG 43448).